Here is a 246-residue protein sequence, read N- to C-terminus: O-antigen export system ATP-binding protein RfbB (246 aa).

The 225-residue stretch at 22-246 folds into the ABC transporter domain; it reads SGIKDLVFHP…IIELYKQAMA (225 aa). 63–70 contacts ATP; the sequence is GRNGAGKS.

It belongs to the ABC transporter superfamily.

It localises to the cell inner membrane. Functionally, may form an ATP-driven O-antigen export apparatus, in association with RfbA. In Klebsiella pneumoniae, this protein is O-antigen export system ATP-binding protein RfbB (rfbB).